The primary structure comprises 353 residues: CCN family member 3 (353 aa).

Residues Met-1–Val-26 form the signal peptide. One can recognise an IGFBP N-terminal domain in the interval Arg-29 to Leu-103. Cystine bridges form between Cys-33–Cys-59, Cys-37–Cys-61, Cys-41–Cys-62, Cys-48–Cys-65, Cys-73–Cys-87, and Cys-79–Cys-100. Positions Asp-106 to Glu-172 constitute a VWFC domain. The region spanning Asn-203–Glu-248 is the TSP type-1 domain. 5 cysteine pairs are disulfide-bonded: Cys-260–Cys-297, Cys-277–Cys-311, Cys-288–Cys-327, Cys-291–Cys-329, and Cys-296–Cys-333. One can recognise a CTCK domain in the interval Cys-260 to Pro-334. A glycan (N-linked (GlcNAc...) asparagine) is linked at Asn-276.

This sequence belongs to the CCN family.

Its subcellular location is the secreted. It localises to the cytoplasm. The protein resides in the cell junction. The protein localises to the gap junction. Immediate-early protein likely to play a role in cell growth regulation. The chain is CCN family member 3 (CCN3) from Coturnix japonica (Japanese quail).